The following is a 71-amino-acid chain: UPF0346 protein SAK_1533 (71 aa).

It belongs to the UPF0346 family.

In Streptococcus agalactiae serotype Ia (strain ATCC 27591 / A909 / CDC SS700), this protein is UPF0346 protein SAK_1533.